We begin with the raw amino-acid sequence, 209 residues long: A-type ATP synthase subunit D (209 aa).

Belongs to the V-ATPase D subunit family. As to quaternary structure, has multiple subunits with at least A(3), B(3), C, D, E, F, H, I and proteolipid K(x).

It is found in the cell membrane. Its function is as follows. Component of the A-type ATP synthase that produces ATP from ADP in the presence of a proton gradient across the membrane. In Thermoplasma volcanium (strain ATCC 51530 / DSM 4299 / JCM 9571 / NBRC 15438 / GSS1), this protein is A-type ATP synthase subunit D.